Reading from the N-terminus, the 301-residue chain is Phosphatidylglycerol--prolipoprotein diacylglyceryl transferase (301 aa).

Helical transmembrane passes span Leu17 to Gly37, Met59 to Tyr79, Gly97 to Trp117, Phe129 to Gly149, Pro203 to Phe223, Val230 to Phe250, and Phe257 to Ile277. Arg142 lines the a 1,2-diacyl-sn-glycero-3-phospho-(1'-sn-glycerol) pocket.

This sequence belongs to the Lgt family.

It is found in the cell inner membrane. The enzyme catalyses L-cysteinyl-[prolipoprotein] + a 1,2-diacyl-sn-glycero-3-phospho-(1'-sn-glycerol) = an S-1,2-diacyl-sn-glyceryl-L-cysteinyl-[prolipoprotein] + sn-glycerol 1-phosphate + H(+). It participates in protein modification; lipoprotein biosynthesis (diacylglyceryl transfer). Its function is as follows. Catalyzes the transfer of the diacylglyceryl group from phosphatidylglycerol to the sulfhydryl group of the N-terminal cysteine of a prolipoprotein, the first step in the formation of mature lipoproteins. The chain is Phosphatidylglycerol--prolipoprotein diacylglyceryl transferase from Paraburkholderia phymatum (strain DSM 17167 / CIP 108236 / LMG 21445 / STM815) (Burkholderia phymatum).